The following is a 1051-amino-acid chain: Carbamoyl phosphate synthase large chain (1051 aa).

The tract at residues 1 to 399 is carboxyphosphate synthetic domain; it reads MRETPKKVLV…SLQKAIRMLD (399 aa). Residues Arg127, Arg167, Gly173, Gly174, Lys206, Leu208, Glu213, Gly239, Val240, His241, Gln282, and Glu296 each contribute to the ATP site. The ATP-grasp 1 domain occupies 131-325; the sequence is RETMIENNLP…LAYVSAKLAL (195 aa). Mg(2+) is bound by residues Gln282, Glu296, and Asn298. Positions 282, 296, and 298 each coordinate Mn(2+). An oligomerization domain region spans residues 400-548; it reads IGEPGVVGGK…LTYNGTEDDI (149 aa). The interval 549–930 is carbamoyl phosphate synthetic domain; the sequence is EFSQGNKLLI…LKSWLSSMPN (382 aa). The ATP-grasp 2 domain occupies 673-863; the sequence is SKLLDKLGIS…LINESMKAIF (191 aa). ATP-binding residues include Arg709, Lys748, Ile750, Glu755, Gly779, Val780, His781, Ser782, Gln822, and Glu834. Positions 822, 834, and 836 each coordinate Mg(2+). Residues Gln822, Glu834, and Asn836 each coordinate Mn(2+). Residues 930–1051 enclose the MGS-like domain; it reads NRIPNKNGIA…FEISEYGGGI (122 aa). The allosteric domain stretch occupies residues 931–1051; sequence RIPNKNGIAL…FEISEYGGGI (121 aa).

Belongs to the CarB family. Composed of two chains; the small (or glutamine) chain promotes the hydrolysis of glutamine to ammonia, which is used by the large (or ammonia) chain to synthesize carbamoyl phosphate. Tetramer of heterodimers (alpha,beta)4. Mg(2+) is required as a cofactor. It depends on Mn(2+) as a cofactor.

It carries out the reaction hydrogencarbonate + L-glutamine + 2 ATP + H2O = carbamoyl phosphate + L-glutamate + 2 ADP + phosphate + 2 H(+). The catalysed reaction is hydrogencarbonate + NH4(+) + 2 ATP = carbamoyl phosphate + 2 ADP + phosphate + 2 H(+). It functions in the pathway amino-acid biosynthesis; L-arginine biosynthesis; carbamoyl phosphate from bicarbonate: step 1/1. The protein operates within pyrimidine metabolism; UMP biosynthesis via de novo pathway; (S)-dihydroorotate from bicarbonate: step 1/3. Its function is as follows. Large subunit of the glutamine-dependent carbamoyl phosphate synthetase (CPSase). CPSase catalyzes the formation of carbamoyl phosphate from the ammonia moiety of glutamine, carbonate, and phosphate donated by ATP, constituting the first step of 2 biosynthetic pathways, one leading to arginine and/or urea and the other to pyrimidine nucleotides. The large subunit (synthetase) binds the substrates ammonia (free or transferred from glutamine from the small subunit), hydrogencarbonate and ATP and carries out an ATP-coupled ligase reaction, activating hydrogencarbonate by forming carboxy phosphate which reacts with ammonia to form carbamoyl phosphate. The protein is Carbamoyl phosphate synthase large chain of Saccharolobus solfataricus (strain ATCC 35092 / DSM 1617 / JCM 11322 / P2) (Sulfolobus solfataricus).